Reading from the N-terminus, the 333-residue chain is DNA-directed RNA polymerase subunit alpha (333 aa).

Residues 1-233 form an alpha N-terminal domain (alpha-NTD) region; sequence MVREKIRVST…DLFIPFLHAE (233 aa). The tract at residues 269-333 is alpha C-terminal domain (alpha-CTD); that stretch reads IALKYIFIDQ…DILEMEKNFA (65 aa).

This sequence belongs to the RNA polymerase alpha chain family. In plastids the minimal PEP RNA polymerase catalytic core is composed of four subunits: alpha, beta, beta', and beta''. When a (nuclear-encoded) sigma factor is associated with the core the holoenzyme is formed, which can initiate transcription.

The protein resides in the plastid. It localises to the chloroplast. It carries out the reaction RNA(n) + a ribonucleoside 5'-triphosphate = RNA(n+1) + diphosphate. Its function is as follows. DNA-dependent RNA polymerase catalyzes the transcription of DNA into RNA using the four ribonucleoside triphosphates as substrates. The polypeptide is DNA-directed RNA polymerase subunit alpha (Cucumis sativus (Cucumber)).